The sequence spans 277 residues: Glutamate racemase (277 aa).

Residues 25 to 26 (DS) and 57 to 58 (YG) each bind substrate. The Proton donor/acceptor role is filled by C89. 90-91 (NT) is a binding site for substrate. The active-site Proton donor/acceptor is C204. 205 to 206 (TH) serves as a coordination point for substrate.

It belongs to the aspartate/glutamate racemases family.

It catalyses the reaction L-glutamate = D-glutamate. Its pathway is cell wall biogenesis; peptidoglycan biosynthesis. In terms of biological role, provides the (R)-glutamate required for cell wall biosynthesis. This is Glutamate racemase from Brucella abortus (strain 2308).